Consider the following 494-residue polypeptide: Inosine-5'-monophosphate dehydrogenase (494 aa).

CBS domains follow at residues 93–154 and 158–217; these read IIRN…DEKI and MTTN…CKDS. NAD(+) is bound by residues Asp251 and 301 to 303; that span reads GIG. Residues Gly303 and Gly305 each contribute to the K(+) site. IMP is bound at residue Ser306. A K(+)-binding site is contributed by Cys308. Catalysis depends on Cys308, which acts as the Thioimidate intermediate. IMP contacts are provided by residues 341–343, 364–365, and 388–392; these read DGG, GS, and YRGMG. The active-site Proton acceptor is the Arg406. An IMP-binding site is contributed by Glu421. 3 residues coordinate K(+): Glu475, Ser476, and His477.

The protein belongs to the IMPDH/GMPR family. Homotetramer. K(+) serves as cofactor.

It carries out the reaction IMP + NAD(+) + H2O = XMP + NADH + H(+). It functions in the pathway purine metabolism; XMP biosynthesis via de novo pathway; XMP from IMP: step 1/1. Mycophenolic acid (MPA) is a non-competitive inhibitor that prevents formation of the closed enzyme conformation by binding to the same site as the amobile flap. In contrast, mizoribine monophosphate (MZP) is a competitive inhibitor that induces the closed conformation. MPA is a potent inhibitor of mammalian IMPDHs but a poor inhibitor of the bacterial enzymes. MZP is a more potent inhibitor of bacterial IMPDH. Functionally, catalyzes the conversion of inosine 5'-phosphate (IMP) to xanthosine 5'-phosphate (XMP), the first committed and rate-limiting step in the de novo synthesis of guanine nucleotides, and therefore plays an important role in the regulation of cell growth. The protein is Inosine-5'-monophosphate dehydrogenase of Chlorobaculum tepidum (strain ATCC 49652 / DSM 12025 / NBRC 103806 / TLS) (Chlorobium tepidum).